Consider the following 268-residue polypeptide: Putative carbamate hydrolase RutD (268 aa).

The AB hydrolase-1 domain occupies Val-24 to Gly-243.

It belongs to the AB hydrolase superfamily. Hydrolase RutD family.

The catalysed reaction is carbamate + 2 H(+) = NH4(+) + CO2. Its function is as follows. Involved in pyrimidine catabolism. May facilitate the hydrolysis of carbamate, a reaction that can also occur spontaneously. This is Putative carbamate hydrolase RutD from Caulobacter sp. (strain K31).